The following is a 359-amino-acid chain: Phosphate acyltransferase (359 aa).

It belongs to the PlsX family. In terms of assembly, homodimer. Probably interacts with PlsY.

It localises to the cytoplasm. It carries out the reaction a fatty acyl-[ACP] + phosphate = an acyl phosphate + holo-[ACP]. Its pathway is lipid metabolism; phospholipid metabolism. Its function is as follows. Catalyzes the reversible formation of acyl-phosphate (acyl-PO(4)) from acyl-[acyl-carrier-protein] (acyl-ACP). This enzyme utilizes acyl-ACP as fatty acyl donor, but not acyl-CoA. In Salmonella agona (strain SL483), this protein is Phosphate acyltransferase.